The chain runs to 310 residues: N-acetyl-gamma-glutamyl-phosphate reductase (310 aa).

Residue Cys-117 is part of the active site.

Belongs to the NAGSA dehydrogenase family. Type 2 subfamily.

It is found in the cytoplasm. It catalyses the reaction N-acetyl-L-glutamate 5-semialdehyde + phosphate + NADP(+) = N-acetyl-L-glutamyl 5-phosphate + NADPH + H(+). It participates in amino-acid biosynthesis; L-arginine biosynthesis; N(2)-acetyl-L-ornithine from L-glutamate: step 3/4. Functionally, catalyzes the NADPH-dependent reduction of N-acetyl-5-glutamyl phosphate to yield N-acetyl-L-glutamate 5-semialdehyde. In Rhizobium meliloti (strain 1021) (Ensifer meliloti), this protein is N-acetyl-gamma-glutamyl-phosphate reductase.